We begin with the raw amino-acid sequence, 72 residues long: Teretoxin Tan11.1 (72 aa).

Residues 1–21 (MLATKMSVTFCFLLMLTTVML) form the signal peptide. The propeptide occupies 22-31 (PTEAKTVAGR).

The protein belongs to the teretoxin H (TH) superfamily. Contains 4 disulfide bonds. In terms of tissue distribution, expressed by the venom duct.

The protein localises to the secreted. This chain is Teretoxin Tan11.1, found in Terebra anilis (Auger snail).